The primary structure comprises 67 residues: uncharacterized protein (67 aa).

The next 2 helical transmembrane spans lie at 10 to 32 and 44 to 66; these read NLSH…TAFI and ATLT…MGQW.

Its subcellular location is the cell membrane. This is an uncharacterized protein from Archaeoglobus fulgidus (strain ATCC 49558 / DSM 4304 / JCM 9628 / NBRC 100126 / VC-16).